Consider the following 637-residue polypeptide: Threonine--tRNA ligase (637 aa).

The 61-residue stretch at 1–61 folds into the TGS domain; the sequence is MLNITLPDGS…VEDSAVQIIT (61 aa). The tract at residues 242–533 is catalytic; that stretch reads DHRKLGKQLD…LIENHAGSFP (292 aa). Residues Cys333, His384, and His510 each coordinate Zn(2+).

This sequence belongs to the class-II aminoacyl-tRNA synthetase family. Homodimer. Zn(2+) is required as a cofactor.

It localises to the cytoplasm. It catalyses the reaction tRNA(Thr) + L-threonine + ATP = L-threonyl-tRNA(Thr) + AMP + diphosphate + H(+). Its function is as follows. Catalyzes the attachment of threonine to tRNA(Thr) in a two-step reaction: L-threonine is first activated by ATP to form Thr-AMP and then transferred to the acceptor end of tRNA(Thr). Also edits incorrectly charged L-seryl-tRNA(Thr). This chain is Threonine--tRNA ligase, found in Neisseria meningitidis serogroup A / serotype 4A (strain DSM 15465 / Z2491).